The chain runs to 555 residues: 1,3-beta-glucanosyltransferase GAS2 (555 aa).

Positions 1 to 24 (MNKKQNFYAAIIVAIFLCLQLSHG) are cleaved as a signal peptide. A disulfide bridge connects residues Cys-89 and Cys-118. (1,3-beta-D-glucosyl)n contacts are provided by residues Tyr-107, 134 to 142 (SEPDISINR), Asn-175, Glu-176, Asp-217, and Arg-222. Residue Glu-176 is the Proton donor of the active site. 6 disulfide bridges follow: Cys-231-Cys-367, Cys-247-Cys-278, Cys-390-Cys-442, Cys-392-Cys-489, Cys-399-Cys-466, and Cys-419-Cys-424. Glu-275 functions as the Nucleophile in the catalytic mechanism. Tyr-307 lines the (1,3-beta-D-glucosyl)n pocket. An N-linked (GlcNAc...) asparagine glycan is attached at Asn-498. A lipid anchor (GPI-anchor amidated aspartate) is attached at Asp-531. Residues 532–555 (GTIAFKTSGFVILLISMIAAGILL) constitute a propeptide, removed in mature form.

This sequence belongs to the glycosyl hydrolase 72 family. In terms of processing, N-glycosylated.

The protein localises to the cell membrane. In terms of biological role, splits internally a 1,3-beta-glucan molecule and transfers the newly generated reducing end (the donor) to the non-reducing end of another 1,3-beta-glucan molecule (the acceptor) forming a 1,3-beta linkage, resulting in the elongation of 1,3-beta-glucan chains in the cell wall. Involved in spore wall assembly. In Saccharomyces cerevisiae (strain ATCC 204508 / S288c) (Baker's yeast), this protein is 1,3-beta-glucanosyltransferase GAS2 (GAS2).